A 600-amino-acid chain; its full sequence is Epidermal growth factor receptor kinase substrate 8-like protein 3 (600 aa).

One can recognise a PTB domain in the interval 28-155; the sequence is QHRVEHLMTC…ALEEELEERP (128 aa). Disordered stretches follow at residues 152 to 245 and 429 to 452; these read EERP…PERD and LHFP…PLSS. Residues 204-214 are compositionally biased toward low complexity; sequence SERSISPSSRS. At serine 238 the chain carries Phosphoserine. Positions 457–516 constitute an SH3 domain; sequence RAALKMQVLYEFEARNAQELTVAQGEILEVLDQSKRWWLVKNEAGLTGYIPSNILEPLPA.

This sequence belongs to the EPS8 family. Interacts with ABI1. Part of a complex that contains SOS1, ABI1 and EPS8L2. Interacts with FASLG. As to expression, detected in embryonic gut. Detected in adult testis, placenta, adrenal gland and intestine.

It localises to the cytoplasm. This chain is Epidermal growth factor receptor kinase substrate 8-like protein 3 (Eps8l3), found in Mus musculus (Mouse).